The chain runs to 88 residues: Arminin 1c (88 aa).

Residues 1–18 (MKPVFVILFLTCIAFTYA) form the signal peptide. The propeptide occupies 19–57 (ESYEDVKEEIKNEVEREIFEDLEEESDVLDSNVREFNDA). Val-85 is modified (valine amide).

Belongs to the arminin family. As to expression, expressed in entodermal epithelium along the body column.

It is found in the secreted. The protein resides in the target cell membrane. Its function is as follows. Antimicrobial peptide with a broad-spectrum antimicrobial activity. Keeps its antibacterial activity under a wide range of salt concentrations that mimic physiological conditions of human blood, which is surprising, since Hydra is an obligate freshwater animal with nearly no salt tolerance. Does not affect red blood cells. The polypeptide is Arminin 1c (Hydra vulgaris (Hydra)).